The chain runs to 144 residues: Granulocyte-macrophage colony-stimulating factor (144 aa).

The signal sequence occupies residues 1–17; that stretch reads MWLQNLLFLGIVVYSFS. Ser-22 carries O-linked (GalNAc...) serine glycosylation. An O-linked (GalNAc...) threonine glycan is attached at Thr-27. 2 cysteine pairs are disulfide-bonded: Cys-71-Cys-113 and Cys-105-Cys-138. A glycan (N-linked (GlcNAc...) asparagine) is linked at Asn-86.

It belongs to the GM-CSF family. Monomer. The signaling GM-CSF receptor complex is a dodecamer of two head-to-head hexamers of two alpha, two beta, and two ligand subunits.

Its subcellular location is the secreted. Functionally, cytokine that stimulates the growth and differentiation of hematopoietic precursor cells from various lineages, including granulocytes, macrophages, eosinophils and erythrocytes. The protein is Granulocyte-macrophage colony-stimulating factor (Csf2) of Rattus norvegicus (Rat).